The sequence spans 282 residues: Undecaprenyl-diphosphatase (282 aa).

8 helical membrane-spanning segments follow: residues 1-21 (MTLIQAILLGIIQGLTEFLPI), 39-59 (PGAAFTAIIQIGTLGAVMLYF), 85-105 (AKMGWMIAAGTLPIVAFGLLF), 115-135 (SLYWISGALIILALVLSLAEW), 153-173 (IGWKEALLIGLAQAIALIPGS), 193-213 (AARFSFLLSLPAVFAAGAFEL), 229-249 (NLAVATITSGIVGYLSIAFLL), and 259-279 (IFIAYRLAAGAGLLLLLGGGT).

Belongs to the UppP family.

It is found in the cell inner membrane. It carries out the reaction di-trans,octa-cis-undecaprenyl diphosphate + H2O = di-trans,octa-cis-undecaprenyl phosphate + phosphate + H(+). Functionally, catalyzes the dephosphorylation of undecaprenyl diphosphate (UPP). Confers resistance to bacitracin. The protein is Undecaprenyl-diphosphatase of Chlorobium luteolum (strain DSM 273 / BCRC 81028 / 2530) (Pelodictyon luteolum).